The chain runs to 190 residues: Protein GrpE (190 aa).

The segment at 1-42 is disordered; it reads MNEKDNQTTSEPENEQEIIDVNDSGEQPEENETEQPQEEAVE. Residues 26 to 42 show a composition bias toward acidic residues; it reads EQPEENETEQPQEEAVE.

The protein belongs to the GrpE family. As to quaternary structure, homodimer.

It localises to the cytoplasm. Functionally, participates actively in the response to hyperosmotic and heat shock by preventing the aggregation of stress-denatured proteins, in association with DnaK and GrpE. It is the nucleotide exchange factor for DnaK and may function as a thermosensor. Unfolded proteins bind initially to DnaJ; upon interaction with the DnaJ-bound protein, DnaK hydrolyzes its bound ATP, resulting in the formation of a stable complex. GrpE releases ADP from DnaK; ATP binding to DnaK triggers the release of the substrate protein, thus completing the reaction cycle. Several rounds of ATP-dependent interactions between DnaJ, DnaK and GrpE are required for fully efficient folding. The sequence is that of Protein GrpE from Oceanobacillus iheyensis (strain DSM 14371 / CIP 107618 / JCM 11309 / KCTC 3954 / HTE831).